A 161-amino-acid chain; its full sequence is Nucleotide-binding protein XCV3791 (161 aa).

It belongs to the YajQ family.

Its function is as follows. Nucleotide-binding protein. The polypeptide is Nucleotide-binding protein XCV3791 (Xanthomonas euvesicatoria pv. vesicatoria (strain 85-10) (Xanthomonas campestris pv. vesicatoria)).